The following is a 132-amino-acid chain: Guanyl-specific ribonuclease C2 (132 aa).

A signal peptide spans 1-26 (MLYNKLITIAALLVPALAAPQGLDVR). 2 cysteine pairs are disulfide-bonded: Cys-28–Cys-36 and Cys-32–Cys-129. His-66 is a catalytic residue. Catalysis depends on Glu-84, which acts as the Proton acceptor. The Proton donor role is filled by His-118.

It belongs to the ribonuclease N1/T1 family.

It is found in the secreted. It carries out the reaction [RNA] containing guanosine + H2O = an [RNA fragment]-3'-guanosine-3'-phosphate + a 5'-hydroxy-ribonucleotide-3'-[RNA fragment].. In Aspergillus clavatus (strain ATCC 1007 / CBS 513.65 / DSM 816 / NCTC 3887 / NRRL 1 / QM 1276 / 107), this protein is Guanyl-specific ribonuclease C2.